Here is a 203-residue protein sequence, read N- to C-terminus: Type III effector protein HopBF1 (203 aa).

The disordered stretch occupies residues 1–23 (MFNVSNNVAPSRYQGPSSTSVTP). 6 residues coordinate ATP: Ser40, Gln41, Lys42, Asp107, Ile109, and Asp114. Asp155 is an active-site residue. Residue Gln157 coordinates ATP.

The protein belongs to the HopBF1 family.

The protein localises to the secreted. Its subcellular location is the host cell. It carries out the reaction L-seryl-[protein] + ATP = O-phospho-L-seryl-[protein] + ADP + H(+). Its function is as follows. Effector protein that targets and inactivates the eukaryotic molecular chaperone HSP90 during infection. HopBF1 is recognized by HSP90 as a host client. As a result, HopBF1 phosphorylates HSP90, leading to the inactivation of the HSP90 ATPase activity and chaperone function. In vitro, can phosphorylate the recombinant yeast HSP82 (HSP90) and human HSP 90-beta on Ser-108. The polypeptide is Type III effector protein HopBF1 (Ewingella americana (strain ATCC 33852 / DSM 4580 / CCUG 14506 / JCM 5911 / LMG 7869 / NCTC 12157 / CDC 1468-78)).